The following is a 279-amino-acid chain: Complement component 1 Q subcomponent-binding protein, mitochondrial (279 aa).

The N-terminal 71 residues, 1-71 (MLPLLRCVPR…PVPCACGCGA (71 aa)), are a transit peptide targeting the mitochondrion. The segment at 74-91 (TEGDKAFVEFLTDEIKEE) is C1q binding. Residues lysine 89 and lysine 92 each carry the N6-acetyllysine modification. The segment at 134–162 (NNSIPPTFDGEEEPSQGQKAEEQEPELTS) is disordered. Positions 166–210 (FVVEVTKTDGKKTLVLDCHYPEDEIGHEDEAESDIFSIKEVSFQT) are interaction with MAVS. Residue tyrosine 185 is modified to Phosphotyrosine. Phosphoserine occurs at positions 198 and 202. Phosphothreonine is present on threonine 211.

It belongs to the MAM33 family. Homotrimer; three monomers form a donut-shaped structure with an unusually asymmetric charge distribution on the surface. Interacts with CDK13, HRK, VTN, NFYB, ADRA1B, FOXC1, DDX21, DDX50, NCL, SRSF1 and SRSF9. Interacts with CD93; the association may represent a cell surface C1q receptor. Interacts with KRT1; the association represents a cell surface kininogen receptor. Interacts with CD209; the interaction is indicative for a C1q:C1QBP:CD209 signaling complex. Interacts with FBL and RRP1; the respective interactions with C1QBP are competitive. Probably associates with the mitoribosome. Interacts with MAVS; the interaction occurs upon viral transfection. Interacts with PPIF. Interacts with U2AF1L4. Interacts with PLEKHN1. Interacts with VGF-derived peptide TLQP-21. Interacts with MRE11 and RAD50; forming the MRC (MRE11-RAD50-C1QBP) complex that inhibits the activity of MRE11. As to expression, ubiquitous.

The protein resides in the mitochondrion matrix. The protein localises to the nucleus. It localises to the cell membrane. It is found in the secreted. Its subcellular location is the cytoplasm. The protein resides in the nucleolus. Its function is as follows. Multifunctional and multicompartmental protein involved in inflammation and infection processes, ribosome biogenesis, protein synthesis in mitochondria, regulation of apoptosis, transcriptional regulation and pre-mRNA splicing. At the cell surface is thought to act as an endothelial receptor for plasma proteins of the complement and kallikrein-kinin cascades. Putative receptor for C1q; specifically binds to the globular 'heads' of C1q thus inhibiting C1; may perform the receptor function through a complex with C1qR/CD93. In complex with cytokeratin-1/KRT1 is a high affinity receptor for kininogen-1/HMWK. Can also bind other plasma proteins, such as coagulation factor XII leading to its autoactivation. May function to bind initially fluid kininogen-1 to the cell membrane. The secreted form may enhance both extrinsic and intrinsic coagulation pathways. It is postulated that the cell surface form requires docking with transmembrane proteins for downstream signaling which might be specific for a cell-type or response. By acting as C1q receptor is involved in chemotaxis of immature dendritic cells and neutrophils and is proposed to signal through CD209/DC-SIGN on immature dendritic cells, through integrin alpha-4/beta-1 during trophoblast invasion of the decidua, and through integrin beta-1 during endothelial cell adhesion and spreading. Signaling involved in inhibition of innate immune response is implicating the PI3K-AKT/PKB pathway. Required for protein synthesis in mitochondria. In mitochondrial translation may be involved in formation of functional 55S mitoribosomes; the function seems to involve its RNA-binding activity. Acts as a RNA modification reader, which specifically recognizes and binds mitochondrial RNAs modified by C5-methylcytosine (m5C) in response to stress, and promotes recruitment of the mitochondrial degradosome complex, leading to their degradation. May be involved in the nucleolar ribosome maturation process; the function may involve the exchange of FBL for RRP1 in the association with pre-ribosome particles. Involved in regulation of RNA splicing by inhibiting the RNA-binding capacity of SRSF1 and its phosphorylation. Is required for the nuclear translocation of splicing factor U2AF1L4. Involved in regulation of CDKN2A- and HRK-mediated apoptosis. Stabilizes mitochondrial CDKN2A isoform smARF. May be involved in regulation of FOXC1 transcriptional activity and NFY/CCAAT-binding factor complex-mediated transcription. May play a role in antibacterial defense as it can bind to cell surface hyaluronan and inhibit Streptococcus pneumoniae hyaluronate lyase. May be involved in modulation of the immune response; ligation by HCV core protein is resulting in suppression of interleukin-12 production in monocyte-derived dendritic cells. Involved in regulation of antiviral response by inhibiting RIGI- and IFIH1-mediated signaling pathways probably involving its association with MAVS after viral infection. Acts as a regulator of DNA repair via homologous recombination by inhibiting the activity of MRE11: interacts with unphosphorylated MRE11 and RAD50 in absence of DNA damage, preventing formation and activity of the MRN complex. Following DNA damage, dissociates from phosphorylated MRE11, allowing formation of the MRN complex. The polypeptide is Complement component 1 Q subcomponent-binding protein, mitochondrial (C1qbp) (Rattus norvegicus (Rat)).